We begin with the raw amino-acid sequence, 414 residues long: Tryptophan synthase beta chain (414 aa).

The disordered stretch occupies residues 1–28; sequence MVSTISRQDQNNNDDLNQPSKEGRFGKY. Residues 8–18 are compositionally biased toward low complexity; the sequence is QDQNNNDDLNQ. K108 carries the post-translational modification N6-(pyridoxal phosphate)lysine.

This sequence belongs to the TrpB family. Tetramer of two alpha and two beta chains. Pyridoxal 5'-phosphate is required as a cofactor.

The enzyme catalyses (1S,2R)-1-C-(indol-3-yl)glycerol 3-phosphate + L-serine = D-glyceraldehyde 3-phosphate + L-tryptophan + H2O. It participates in amino-acid biosynthesis; L-tryptophan biosynthesis; L-tryptophan from chorismate: step 5/5. The beta subunit is responsible for the synthesis of L-tryptophan from indole and L-serine. This Prochlorococcus marinus subsp. pastoris (strain CCMP1986 / NIES-2087 / MED4) protein is Tryptophan synthase beta chain.